Reading from the N-terminus, the 54-residue chain is U7-ctenitoxin-Pk1a (54 aa).

5 disulfides stabilise this stretch: Cys-3–Cys-17, Cys-10–Cys-23, Cys-14–Cys-52, Cys-16–Cys-37, and Cys-25–Cys-35.

In terms of tissue distribution, expressed by the venom gland.

It is found in the secreted. Functionally, blocks voltage-gated sodium channels (Nav). Causes immediate spastic paralysis and death in mice within 1 minute of injection at dose levels of 1.5 ug per mouse. The polypeptide is U7-ctenitoxin-Pk1a (Phoneutria keyserlingi (Brazilian wandering spider)).